We begin with the raw amino-acid sequence, 2549 residues long: MLGTGPAVATASAATSSNVSVLQQFASGLKSRNEETRAKAAKELQHYVTMELREMSQEESTRFYDQLNHHIFELVSSSDANERKGGILAIASLIGVEGGNSTRIGRFANYLRNLLPSSDPVVMEMASKAIGRLAMAGDTFTAEYVEFEVKRALEWLGADRNEGRRHAAVLVLRELAISVPTFFFQQVQPFFDNIFVAVWDPKQAIREGAVAALRACLILTTQREPKEMQKPQWYRHTFEEAEKGFDETLAKEKGMNRDDRIHGALLILNELVRISSMEGERLREEMEEITQQQLVHDKYCKDLMGFGTKPRHITPFTSFQAVQPQQPNALVGLLGYSSPQGLMGFGTSPSPAKSTLVESRCCRDLMEEKFDQVCQWVLKCRSSKNSLIQMTILNLLPRLAAFRPSAFTDTQYLQDTMNHVLSCVKKEKERTAAFQALGLLSVAVRSEFKVYLPRVLDIIRAALPPKDFAHKRQKTVQVDATVFTCISMLARAMGPGIQQDIKELLEPMLAVGLSPALTAVLYDLSRQIPQLKKDIQDGLLKMLSLVLMHKPLRHPGMPKGLAHQLASPGLTTLPEASDVASITLALRTLGSFEFEGHSLTQFVRHCADHFLNSEHKEIRMEAARTCSRLLTPSIHLISGHAHVVSQTAVQVVADVLSKLLVVGITDPDPDIRYCVLASLDERFDAHLAQAENLQALFVALNDQVFEIRELAICTVGRLSSMNPAFVMPFLRKMLIQILTELEHSGIGRIKEQSARMLGHLVSNAPRLIRPYMEPILKALILKLKDPDPDPNPGVINNVLATIGELAQVSGLEMRKWVDELFIIIMDMLQDSSLLAKRQVALWTLGQLVASTGYVVEPYRKYPTLLEVLLNFLKTEQNQGTRREAIRVLGLLGALDPYKHKVNIGMIDQSRDASAVSLSESKSSQDSSDYSTSEMLVNMGNLPLDEFYPAVSMVALMRIFRDQSLSHHHTMVVQAITFIFKSLGLKCVQFLPQVMPTFLNVIRVCDGAIREFLFQQLGMLVSFVKSHIRPYMDEIVTLMREFWVMNTSIQSTIILLIEQIVVALGGEFKLYLPQLIPHMLRVFMHDNSQGRIVSIKLLAAIQLFGANLDDYLHLLLPPIVKLFDAPEVPLPSRKAALETVDRLTESLDFTDYASRIIHPIVRTLDQSPELRSTAMDTLSSLVFQLGKKYQIFIPMVNKVLVRHRINHQRYDVLICRIVKGYTLADEEEDPLIYQHRMLRSSQGDALASGPVETGPMKKLHVSTINLQKAWGAARRVSKDDWLEWLRRLSLELLKDSSSPSLRSCWALAQAYNPMARDLFNAAFVSCWSELNEDQQDELIRSIELALTSQDIAEVTQTLLNLAEFMEHSDKGPLPLRDDNGIVLLGERAAKCRAYAKALHYKELEFQKGPTPAILESLISINNKLQQPEAASGVLEYAMKHFGELEIQATWYEKLHEWEDALVAYDKKMDTNKEDPELMLGRMRCLEALGEWGQLHQQCCEKWTLVNDETQAKMARMAAAAAWGLGQWDSMEEYTCMIPRDTHDGAFYRAVLALHQDLFSLAQQCIDKARDLLDAELTAMAGESYSRAYGAMVSCHMLSELEEVIQYKLVPERREIIRQIWWERLQGCQRIVEDWQKILMVRSLVVSPHEDMRTWLKYASLCGKSGRLALAHKTLVLLLGVDPSRQLDHPLPTAHPQVTYAYMKNMWKSARKIDAFQHMQHFVQTMQQQAQHAIATEDQQHKQELHKLMARCFLKLGEWQLNLQGINESTIPKVLQYYSAATEHDRSWYKAWHAWAVMNFEAVLHYKHQNQARDEKKKLRHASGANITNATTAATTAASAAAATSTEGSNSESEAESNENSPTPSPLQKKVTEDLSKTLLLYTVPAVQGFFRSISLSRGNNLQDTLRVLTLWFDYGHWPDVNEALVEGVKAIQIDTWLQVIPQLIARIDTPRPLVGRLIHQLLTDIGRYHPQALIYPLTVASKSTTTARHNAANKILKNMCEHSNTLVQQAMMVSEELIRVAILWHEMWHEGLEEASRLYFGERNVKGMFEVLEPLHAMMERGPQTLKETSFNQAYGRDLMEAQEWCRKYMKSGNVKDLTQAWDLYYHVFRRISKQLPQLTSLELQYVSPKLLMCRDLELAVPGTYDPNQPIIRIQSIAPSLQVITSKQRPRKLTLMGSNGHEFVFLLKGHEDLRQDERVMQLFGLVNTLLANDPTSLRKNLSIQRYAVIPLSTNSGLIGWVPHCDTLHALIRDYREKKKILLNIEHRIMLRMAPDYDHLTLMQKVEVFEHAVNNTAGDDLAKLLWLKSPSSEVWFDRRTNYTRSLAVMSMVGYILGLGDRHPSNLMLDRLSGKILHIDFGDCFEVAMTREKFPEKIPFRLTRMLTNAMEVTGLDGNYRTTCHTVMEVLREHKDSVMAVLEAFVYDPLLNWRLMDTNTKGNKRSRTRTDSYSAGQSVEILDGVELGEPAHKKAGTTVPESIHSFIGDGLVKPEALNKKAIQIINRVRDKLTGRDFSHDDTLDVPTQVELLIKQATSHENLCQCYIGWCPFW.

Position 1 is an N-acetylmethionine (Met-1). Positions 1–651 are interaction with NBN; the sequence is MLGTGPAVAT…HVVSQTAVQV (651 aa). 32 HEAT repeats span residues 16–53, 55–99, 100–137, 138–179, 180–220, 222–276, 277–313, 314–364, 365–409, 410–445, 446–494, 495–529, 530–563, 564–596, 597–636, 637–683, 686–724, 727–766, 769–811, 814–853, 857–893, 894–942, 943–988, 989–1027, 1029–1068, 1069–1105, 1106–1144, 1145–1188, 1189–1225, 1226–1273, 1274–1311, and 1312–1345; these read SSNV…MELR, MSQE…VEGG, NSTR…AMAG, DTFT…AISV, PTFF…LILT, QREP…RISS, MEGE…PRHI, TPFT…CCRD, LMEE…AFTD, TQYL…VAVR, SEFK…RAMG, PGIQ…RQIP, QLKK…GLAH, QLAS…EFEG, HSLT…SIHL, ISGH…DERF, HLAQ…MNPA, MPFL…NAPR, RPYM…VSGL, RKWV…STGY, PYRK…LLGA, LDPY…GNLP, LDEF…KCVQ, FLPQ…KSHI, PYMD…GEFK, LYLP…LFGA, NLDD…RLTE, SLDF…GKKY, QIFI…LADE, EEDP…GAAR, RVSK…QAYN, and PMAR…ELAL. Ser-567 carries the post-translational modification Phosphoserine. At Thr-1162 the chain carries Phosphothreonine. An N6-acetyllysine modification is found at Lys-1218. Position 1261 is a phosphoserine (Ser-1261). TPR repeat units follow at residues 1346–1382, 1383–1408, 1409–1442, 1443–1473, 1474–1507, 1508–1541, 1542–1574, 1575–1614, 1615–1649, 1650–1693, 1694–1731, 1732–1786, 1787–1846, 1898–1930, 1931–1970, and 1971–2005; these read TSQD…GIVL, LGER…QKGP, TPAI…HFGE, LEIQ…NKED, PELM…VNDE, TQAK…RDTH, DGAF…LDAE, LTAM…RREI, IRQI…PHED, MRTW…PTAH, PQVT…AQHA, IATE…DRSW, YKAW…STEG, NNLQ…VKAI, QIDT…YHPQ, and ALIY…SNTL. An FAT domain is found at 1382-1982; sequence LLGERAAKCR…IYPLTVASKS (601 aa). The 1D-myo-inositol hexakisphosphate site is built by Lys-1662, Lys-1702, and Arg-1749. Low complexity predominate over residues 1825 to 1860; sequence ITNATTAATTAASAAAATSTEGSNSESEAESNENSP. Residues 1825–1867 are disordered; that stretch reads ITNATTAATTAASAAAATSTEGSNSESEAESNENSPTPSPLQK. The tract at residues 2012 to 2144 is sufficient for interaction with the FKBP1A/rapamycin complex; the sequence is VSEELIRVAI…DLELAVPGTY (133 aa). Lys-2066 is covalently cross-linked (Glycyl lysine isopeptide (Lys-Gly) (interchain with G-Cter in ubiquitin)). Residues 2156–2469 form the PI3K/PI4K catalytic domain; the sequence is IAPSLQVITS…GVELGEPAHK (314 aa). A Phosphoserine; by TBK1 modification is found at Ser-2159. The G-loop stretch occupies residues 2162–2168; sequence VITSKQR. The residue at position 2164 (Thr-2164) is a Phosphothreonine. Positions 2165 and 2167 each coordinate ATP. Thr-2173 carries the phosphothreonine; by PKB/AKT1 modification. Leu-2185, Lys-2187, Glu-2190, Tyr-2225, Gly-2238, Trp-2239, Val-2240, and Thr-2245 together coordinate ATP. The segment at 2258 to 2296 is interaction with MLST8; the sequence is KILLNIEHRIMLRMAPDYDHLTLMQKVEVFEHAVNNTAG. The interval 2335-2343 is catalytic loop; the sequence is GLGDRHPSN. Asn-2343 provides a ligand contact to Mg(2+). ATP is bound by residues Met-2345 and Ile-2356. The activation loop stretch occupies residues 2355–2380; sequence HIDFGDCFEVAMTREKFPEKIPFRLT. Asp-2357 contributes to the Mg(2+) binding site. Position 2446 is a phosphothreonine; by RPS6KB1 (Thr-2446). Residue Ser-2448 is modified to Phosphoserine; by RPS6KB1. A phosphoserine mark is found at Ser-2478 and Ser-2481. The FATC domain maps to 2517 to 2549; sequence DTLDVPTQVELLIKQATSHENLCQCYIGWCPFW.

It belongs to the PI3/PI4-kinase family. As to quaternary structure, part of the mechanistic target of rapamycin complex 1 (mTORC1) which contains MTOR, MLST8 and RPTOR. The mTORC1 complex is a 1 Md obligate dimer of two stoichiometric heterotetramers with overall dimensions of 290 A x 210 A x 135 A. It has a rhomboid shape and a central cavity, the dimeric interfaces are formed by interlocking interactions between the two MTOR and the two RPTOR subunits. The MLST8 subunit forms distal foot-like protuberances, and contacts only one MTOR within the complex, while the small AKT1S1/PRAS40 localizes to the midsection of the central core, in close proximity to RPTOR. mTORC1 associates with AKT1S1/PRAS40, which inhibits its activity by blocking MTOR substrate-recruitment site. Component of the mechanistic target of rapamycin complex 2 (mTORC2), consisting in two heterotretramers composed of MTOR, MLST8, RICTOR and MAPKAP1/SIN1. Interacts with PLPP7 and PML. Interacts with PRR5 and RICTOR; the interaction is direct within the mTORC2 complex and interaction with RICTOR is enhanced by deubiquitination of RICTOR by USP9X. mTORC1 and mTORC2 associate with DEPTOR, which regulates their activity. Interacts with WAC; WAC positively regulates MTOR activity by promoting the assembly of the TTT complex composed of TELO2, TTI1 and TTI2 and the RUVBL complex composed of RUVBL1 and RUVBL2 into the TTT-RUVBL complex which leads to the dimerization of the mTORC1 complex and its subsequent activation. Interacts with UBQLN1. Interacts with TTI1 and TELO2. Interacts with CLIP1; phosphorylates and regulates CLIP1. Interacts with NBN. Interacts with HTR6. Interacts with BRAT1. Interacts with MEAK7 (via C-terminal domain); the interaction increases upon nutrient stimulation. Interacts with TM4SF5; the interaction is positively regulated by arginine and is negatively regulated by leucine. Interacts with GPR137B. Interacts with NCKAP1L. Interacts with TPCN1 and TPCN2; the interaction is required for TPCN1 and TPCN2 sensitivity to ATP. Interacts with ATP6V1A and with CRYAB, forming a ternary complex. Interacts with SLC38A7; this interaction mediates the recruitment of mTORC1 to the lysosome and its subsequent activation. Interacts with TSPAN8. Autophosphorylates when part of mTORC1 or mTORC2. Phosphorylation at Ser-1261, Ser-2159 and Thr-2164 promotes autophosphorylation. Phosphorylated at Ser-2448 by RPS6KB1. Phosphorylation in the kinase domain modulates the interactions of MTOR with RPTOR and AKT1S1/PRAS40 and leads to increased intrinsic mTORC1 kinase activity. Phosphorylation at Ser-2159 by TBK1 in response to growth factors and pathogen recognition receptors promotes mTORC1 activity. Phosphorylation at Ser-2159 by TBK1 in response to EGF growth factor promotes mTORC2 activity, leading to AKT1 phosphorylation and activation. Phosphorylation at Thr-2173 in the ATP-binding region by AKT1 strongly reduces kinase activity. Post-translationally, ubiquitinated at Lys-2066 by the SCF(FBXO22) complex via 'Lys-27'-linked ubiquitination prevents mTORC1 substrate recruitment.

The protein localises to the lysosome membrane. It localises to the endoplasmic reticulum membrane. The protein resides in the golgi apparatus membrane. Its subcellular location is the cell membrane. It is found in the mitochondrion outer membrane. The protein localises to the cytoplasm. It localises to the nucleus. The protein resides in the PML body. Its subcellular location is the microsome membrane. It is found in the cytoplasmic vesicle. The protein localises to the phagosome. It catalyses the reaction L-seryl-[protein] + ATP = O-phospho-L-seryl-[protein] + ADP + H(+). The catalysed reaction is L-threonyl-[protein] + ATP = O-phospho-L-threonyl-[protein] + ADP + H(+). It carries out the reaction L-tyrosyl-[protein] + ATP = O-phospho-L-tyrosyl-[protein] + ADP + H(+). With respect to regulation, the mTORC1 complex is activated in response to nutrients, growth factors or amino acids: activation requires relocalization of the mTORC1 complex to lysosomes that is mediated by the Ragulator complex, SLC38A9, and the Rag GTPases RagA/RRAGA, RagB/RRAGB, RagC/RRAGC and RagD/RRAGD. Activation of mTORC1 by growth factors such as insulin involves AKT1-mediated phosphorylation of TSC1-TSC2, which leads to the activation of the RHEB GTPase a potent activator of the protein kinase activity of mTORC1. Insulin-stimulated and amino acid-dependent phosphorylation at Ser-1261 promotes autophosphorylation and the activation of mTORC1. On the other hand, low cellular energy levels can inhibit mTORC1 through activation of PRKAA1 while hypoxia inhibits mTORC1 through a REDD1-dependent mechanism which may also require PRKAA1. The kinase activity of MTOR within the mTORC1 complex is positively regulated by MLST8. The kinase activity of MTOR is inhibited by DEPTOR and AKT1S1. The non-canonical mTORC1 complex is independent of the RHEB GTPase and specifically mediates phosphorylation of MiT/TFE factors TFEB and TFE3 but not other mTORC1 substrates: it is activated by FLCN, which activates Rag GTPases RagC/RRAGC and RagD/RRAGD. MTOR is the target of the immunosuppressive and anti-cancer drug rapamycin which acts in complex with FKBP1A/FKBP12, and specifically inhibits its kinase activity. mTORC2 is also activated by growth factors, but seems to be nutrient-insensitive. mTORC2 associates and is directly activated by ribosomes. mTORC2 may also be regulated by RHEB but in an indirect manner through the PI3K signaling pathway. Its function is as follows. Serine/threonine protein kinase which is a central regulator of cellular metabolism, growth and survival in response to hormones, growth factors, nutrients, energy and stress signals. MTOR directly or indirectly regulates the phosphorylation of at least 800 proteins. Functions as part of 2 structurally and functionally distinct signaling complexes mTORC1 and mTORC2 (mTOR complex 1 and 2). In response to nutrients, growth factors or amino acids, mTORC1 is recruited to the lysosome membrane and promotes protein, lipid and nucleotide synthesis by phosphorylating key regulators of mRNA translation and ribosome synthesis. This includes phosphorylation of EIF4EBP1 and release of its inhibition toward the elongation initiation factor 4E (eiF4E). Moreover, phosphorylates and activates RPS6KB1 and RPS6KB2 that promote protein synthesis by modulating the activity of their downstream targets including ribosomal protein S6, eukaryotic translation initiation factor EIF4B, and the inhibitor of translation initiation PDCD4. Stimulates the pyrimidine biosynthesis pathway, both by acute regulation through RPS6KB1-mediated phosphorylation of the biosynthetic enzyme CAD, and delayed regulation, through transcriptional enhancement of the pentose phosphate pathway which produces 5-phosphoribosyl-1-pyrophosphate (PRPP), an allosteric activator of CAD at a later step in synthesis, this function is dependent on the mTORC1 complex. Regulates ribosome synthesis by activating RNA polymerase III-dependent transcription through phosphorylation and inhibition of MAF1 an RNA polymerase III-repressor. Activates dormant ribosomes by mediating phosphorylation of SERBP1, leading to SERBP1 inactivation and reactivation of translation. In parallel to protein synthesis, also regulates lipid synthesis through SREBF1/SREBP1 and LPIN1. To maintain energy homeostasis mTORC1 may also regulate mitochondrial biogenesis through regulation of PPARGC1A. In the same time, mTORC1 inhibits catabolic pathways: negatively regulates autophagy through phosphorylation of ULK1. Under nutrient sufficiency, phosphorylates ULK1 at 'Ser-758', disrupting the interaction with AMPK and preventing activation of ULK1. Also prevents autophagy through phosphorylation of the autophagy inhibitor DAP. Also prevents autophagy by phosphorylating RUBCNL/Pacer under nutrient-rich conditions. Prevents autophagy by mediating phosphorylation of AMBRA1, thereby inhibiting AMBRA1 ability to mediate ubiquitination of ULK1 and interaction between AMBRA1 and PPP2CA. mTORC1 exerts a feedback control on upstream growth factor signaling that includes phosphorylation and activation of GRB10 a INSR-dependent signaling suppressor. Among other potential targets mTORC1 may phosphorylate CLIP1 and regulate microtubules. The mTORC1 complex is inhibited in response to starvation and amino acid depletion. The non-canonical mTORC1 complex, which acts independently of RHEB, specifically mediates phosphorylation of MiT/TFE factors TFEB and TFE3 in the presence of nutrients, promoting their cytosolic retention and inactivation. Upon starvation or lysosomal stress, inhibition of mTORC1 induces dephosphorylation and nuclear translocation of TFEB and TFE3, promoting their transcription factor activity. The mTORC1 complex regulates pyroptosis in macrophages by promoting GSDMD oligomerization. MTOR phosphorylates RPTOR which in turn inhibits mTORC1. As part of the mTORC2 complex, MTOR transduces signals from growth factors to pathways involved in proliferation, cytoskeletal organization, lipogenesis and anabolic output. In response to growth factors, mTORC2 phosphorylates and activates AGC protein kinase family members, including AKT (AKT1, AKT2 and AKT3), PKC (PRKCA, PRKCB and PRKCE) and SGK1. In contrast to mTORC1, mTORC2 is nutrient-insensitive. mTORC2 plays a critical role in AKT1 activation by mediating phosphorylation of different sites depending on the context, such as 'Thr-450', 'Ser-473', 'Ser-477' or 'Thr-479', facilitating the phosphorylation of the activation loop of AKT1 on 'Thr-308' by PDPK1/PDK1 which is a prerequisite for full activation. mTORC2 also regulates the phosphorylation of SGK1 at 'Ser-422'. mTORC2 may regulate the actin cytoskeleton, through phosphorylation of PRKCA, PXN and activation of the Rho-type guanine nucleotide exchange factors RHOA and RAC1A or RAC1B. The mTORC2 complex also phosphorylates various proteins involved in insulin signaling, such as FBXW8 and IGF2BP1. May also regulate insulin signaling by acting as a tyrosine protein kinase that catalyzes phosphorylation of IGF1R and INSR. Regulates osteoclastogenesis by adjusting the expression of CEBPB isoforms. Plays an important regulatory role in the circadian clock function; regulates period length and rhythm amplitude of the suprachiasmatic nucleus (SCN) and liver clocks. This Mus musculus (Mouse) protein is Serine/threonine-protein kinase mTOR.